The primary structure comprises 209 residues: Uracil phosphoribosyltransferase (209 aa).

5-phospho-alpha-D-ribose 1-diphosphate contacts are provided by residues Arg79, Arg104, and 131-139 (DPMLATGGS). Residues Ile194 and 199 to 201 (GDA) contribute to the uracil site. 5-phospho-alpha-D-ribose 1-diphosphate is bound at residue Asp200.

Belongs to the UPRTase family. Requires Mg(2+) as cofactor.

The catalysed reaction is UMP + diphosphate = 5-phospho-alpha-D-ribose 1-diphosphate + uracil. It functions in the pathway pyrimidine metabolism; UMP biosynthesis via salvage pathway; UMP from uracil: step 1/1. Allosterically activated by GTP. In terms of biological role, catalyzes the conversion of uracil and 5-phospho-alpha-D-ribose 1-diphosphate (PRPP) to UMP and diphosphate. This chain is Uracil phosphoribosyltransferase, found in Bacillus velezensis (strain DSM 23117 / BGSC 10A6 / LMG 26770 / FZB42) (Bacillus amyloliquefaciens subsp. plantarum).